Here is a 68-residue protein sequence, read N- to C-terminus: Putative membrane protein insertion efficiency factor (68 aa).

Belongs to the UPF0161 family.

It is found in the cell membrane. In terms of biological role, could be involved in insertion of integral membrane proteins into the membrane. The protein is Putative membrane protein insertion efficiency factor of Syntrophomonas wolfei subsp. wolfei (strain DSM 2245B / Goettingen).